Consider the following 140-residue polypeptide: Nucleoside diphosphate kinase (140 aa).

The ATP site is built by Lys-11, Phe-59, Arg-87, Thr-93, Arg-104, and Asn-114. The active-site Pros-phosphohistidine intermediate is the His-117.

The protein belongs to the NDK family. Homotetramer. It depends on Mg(2+) as a cofactor.

The protein resides in the cytoplasm. It carries out the reaction a 2'-deoxyribonucleoside 5'-diphosphate + ATP = a 2'-deoxyribonucleoside 5'-triphosphate + ADP. The catalysed reaction is a ribonucleoside 5'-diphosphate + ATP = a ribonucleoside 5'-triphosphate + ADP. Major role in the synthesis of nucleoside triphosphates other than ATP. The ATP gamma phosphate is transferred to the NDP beta phosphate via a ping-pong mechanism, using a phosphorylated active-site intermediate. The chain is Nucleoside diphosphate kinase from Rhodopseudomonas palustris (strain BisB18).